The chain runs to 2347 residues: MKNIYCLIPKLVNFATLGCLWISVVQCTVLNSCLKSCVTNLGQQLDLGTPHNLSEPCIQGCHFWNSVDQKNCALKCRESCEVGCSSAEGAYEEEVLENADLPTAPFASSIGSHNMTLRWKSANFSGVKYIIQWKYAQLLGSWTYTKTVSRPSYVVKPLHPFTEYIFRVVWIFTAQLQLYSPPSPSYRTHPHGVPETAPLIRNIESSSPDTVEVSWDPPQFPGGPILGYNLRLISKNQKLDAGTQRTSFQFYSTLPNTIYRFSIAAVNEVGEGPEAESSITTSSSAVQQEEQWLFLSRKTSLRKRSLKHLVDEAHCLRLDAIYHNITGISVDVHQQIVYFSEGTLIWAKKAANMSDVSDLRIFYRGSGLISSISIDWLYQRMYFIMDELVCVCDLENCSNIEEITPPSISAPQKIVADSYNGYVFYLLRDGIYRADLPVPSGRCAEAVRIVESCTLKDFAIKPQAKRIIYFNDTAQVFMSTFLDGSASHLILPRIPFADVKSFACENNDFLVTDGKVIFQQDALSFNEFIVGCDLSHIEEFGFGNLVIFGSSSQLHPLPGRPQELSVLFGSHQALVQWKPPALAIGANVILISDIIELFELGPSAWQNWTYEVKVSTQDPPEVTHIFLNISGTMLNVPELQSAMKYKVSVRASSPKRPGPWSEPSVGTTLVPASEPPFIMAVKEDGLWSKPLNSFGPGEFLSSDIGNVSDMDWYNNSLYYSDTKGDVFVWLLNGTDISENYHLPSIAGAGALAFEWLGHFLYWAGKTYVIQRQSVLTGHTDIVTHVKLLVNDMVVDSVGGYLYWTTLYSVESTRLNGESSLVLQTQPWFSGKKVIALTLDLSDGLLYWLVQDSQCIHLYTAVLRGQSTGDTTITEFAAWSTSEISQNALMYYSGRLFWINGFRIITTQEIGQKTSVSVLEPARFNQFTIIQTSLKPLPGNFSFTPKVIPDSVQESSFRIEGNASSFQILWNGPPAVDWGVVFYSVEFSAHSKFLASEQHSLPVFTVEGLEPYALFNLSVTPYTYWGKGPKTSLSLRAPETVPSAPENPRIFILPSGKCCNKNEVVVEFRWNKPKHENGVLTKFEIFYNISNQSITNKTCEDWIAVNVTPSVMSFQLEGMSPRCFIAFQVRAFTSKGPGPYADVVKSTTSEINPFPHLITLLGNKIVFLDMDQNQVVWTFSAERVISAVCYTADNEMGYYAEGDSLFLLHLHNRSSSELFQDSLVFDITVITIDWISRHLYFALKESQNGMQVFDVDLEHKVKYPREVKIHNRNSTIISFSVYPLLSRLYWTEVSNFGYQMFYYSIISHTLHRILQPTATNQQNKRNQCSCNVTEFELSGAMAIDTSNLEKPLIYFAKAQEIWAMDLEGCQCWRVITVPAMLAGKTLVSLTVDGDLIYWIITAKDSTQIYQAKKGNGAIVSQVKALRSRHILAYSSVMQPFPDKAFLSLASDTVEPTILNATNTSLTIRLPLAKTNLTWYGITSPTPTYLVYYAEVNDRKNSSDLKYRILEFQDSIALIEDLQPFSTYMIQIAVKNYYSDPLEHLPPGKEIWGKTKNGVPEAVQLINTTVRSDTSLIISWRESHKPNGPKESVRYQLAISHLALIPETPLRQSEFPNGRLTLLVTRLSGGNIYVLKVLACHSEEMWCTESHPVTVEMFNTPEKPYSLVPENTSLQFNWKAPLNVNLIRFWVELQKWKYNEFYHVKTSCSQGPAYVCNITNLQPYTSYNVRVVVVYKTGENSTSLPESFKTKAGVPNKPGIPKLLEGSKNSIQWEKAEDNGCRITYYILEIRKSTSNNLQNQNLRWKMTFNGSCSSVCTWKSKNLKGIFQFRVVAANNLGFGEYSGISENIILVGDDFWIPETSFILTIIVGIFLVVTIPLTFVWHRRLKNQKSAKEGVTVLINEDKELAELRGLAAGVGLANACYAIHTLPTQEEIENLPAFPREKLTLRLLLGSGAFGEVYEGTAVDILGVGSGEIKVAVKTLKKGSTDQEKIEFLKEAHLMSKFNHPNILKQLGVCLLNEPQYIILELMEGGDLLTYLRKARMATFYGPLLTLVDLVDLCVDISKGCVYLERMHFIHRDLAARNCLVSVKDYTSPRIVKIGDFGLARDIYKNDYYRKRGEGLLPVRWMAPESLMDGIFTTQSDVWSFGILIWEILTLGHQPYPAHSNLDVLNYVQTGGRLEPPRNCPDDLWNLMTQCWAQEPDQRPTFHRIQDQLQLFRNFFLNSIYKSRDEANNSGVINESFEGEDGDVICLNSDDIMPVALMETKNREGLNYMVLATECGQGEEKSEGPLGSQESESCGLRKEEKEPHADKDFCQEKQVAYCPSGKPEGLNYACLTHSGYGDGSD.

An N-terminal signal peptide occupies residues 1–27 (MKNIYCLIPKLVNFATLGCLWISVVQC). Residues 28 to 1859 (TVLNSCLKSC…LVGDDFWIPE (1832 aa)) lie on the Extracellular side of the membrane. Asparagine 52, asparagine 114, and asparagine 123 each carry an N-linked (GlcNAc...) asparagine glycan. Fibronectin type-III domains follow at residues 101-196 (LPTA…VPET) and 197-285 (APLI…SSSA). N-linked (GlcNAc...) asparagine glycosylation is found at asparagine 324, asparagine 352, asparagine 396, asparagine 471, asparagine 607, asparagine 628, asparagine 706, asparagine 714, asparagine 732, asparagine 939, asparagine 961, asparagine 1015, asparagine 1087, asparagine 1090, asparagine 1095, asparagine 1211, asparagine 1272, asparagine 1330, asparagine 1458, asparagine 1461, asparagine 1474, asparagine 1499, asparagine 1565, asparagine 1669, asparagine 1715, asparagine 1738, and asparagine 1808. One can recognise a Fibronectin type-III 3 domain in the interval 557 to 671 (LPGRPQELSV…EPSVGTTLVP (115 aa)). 2 Fibronectin type-III domains span residues 947 to 1042 (IPDS…TVPS) and 1043 to 1150 (APEN…TSEI). Fibronectin type-III domains are found at residues 1450–1556 (DTVE…TKNG), 1557–1656 (VPEA…VEMF), 1658–1751 (TPEK…TKAG), and 1752–1854 (VPNK…VGDD). The helical transmembrane segment at 1860–1882 (TSFILTIIVGIFLVVTIPLTFVW) threads the bilayer. Residues 1883–2347 (HRRLKNQKSA…THSGYGDGSD (465 aa)) are Cytoplasmic-facing. The Protein kinase domain maps to 1945-2222 (LTLRLLLGSG…DQLQLFRNFF (278 aa)). Residues 1951 to 1959 (LGSGAFGEV) and lysine 1980 each bind ATP. The Proton acceptor role is filled by aspartate 2079. Tyrosine 2274 carries the post-translational modification Phosphotyrosine; by autocatalysis. The tract at residues 2284 to 2311 (GEEKSEGPLGSQESESCGLRKEEKEPHA) is disordered. The segment covering 2301–2311 (GLRKEEKEPHA) has biased composition (basic and acidic residues). At tyrosine 2334 the chain carries Phosphotyrosine; by autocatalysis.

The protein belongs to the protein kinase superfamily. Tyr protein kinase family. Insulin receptor subfamily. Interacts with PTPN6 (via SH2 1 domain); the interaction is direct and promotes ROS1 dephosphorylation. Interacts with PTPN11; may activate the PI3 kinase-mTOR signaling pathway. Interacts with VAV3; constitutive interaction mediating VAV3 phosphorylation. In terms of processing, phosphorylated. Probably autophosphorylates. Phosphorylation at Tyr-2274 is required for the interaction with PTPN6 that mediates ROS1 dephosphorylation. Phosphorylation at Tyr-2274 stimulates the kinase activity and the activation of the ERK1 signaling cascade. Phosphorylation at Tyr-2274 and/or Tyr-2334 recruits PTPN11. As to expression, expressed in brain. Expression is increased in primary gliomas.

It localises to the cell membrane. It catalyses the reaction L-tyrosyl-[protein] + ATP = O-phospho-L-tyrosyl-[protein] + ADP + H(+). Inhibited by dephosphorylation by PTPN6. Its function is as follows. Receptor tyrosine kinase (RTK) that plays a role in epithelial cell differentiation and regionalization of the proximal epididymal epithelium. NELL2 is an endogenous ligand for ROS1. Upon endogenous stimulation by NELL2, ROS1 activates the intracellular signaling pathway and triggers epididymal epithelial differentiation and subsequent sperm maturation. May activate several downstream signaling pathways related to cell differentiation, proliferation, growth and survival including the PI3 kinase-mTOR signaling pathway. Mediates the phosphorylation of PTPN11, an activator of this pathway. May also phosphorylate and activate the transcription factor STAT3 to control anchorage-independent cell growth. Mediates the phosphorylation and the activation of VAV3, a guanine nucleotide exchange factor regulating cell morphology. May activate other downstream signaling proteins including AKT1, MAPK1, MAPK3, IRS1 and PLCG2. This is Proto-oncogene tyrosine-protein kinase ROS (ROS1) from Homo sapiens (Human).